The sequence spans 486 residues: Cardiolipin synthase A (486 aa).

2 consecutive transmembrane segments (helical) span residues 3 to 23 (TFYTVISWLLVFGYWLLIAGV) and 38 to 58 (MAWLLVIYILPLVGIVAYLSF). 2 PLD phosphodiesterase domains span residues 219-246 (MDLRQHRKIILIDNRIAYTGSMNMVDPR) and 399-426 (KDGLLHTKSVLVDGQLSLVGTVNLDMRS). Residues His224, Lys226, Asp231, His404, Lys406, and Asp411 contribute to the active site.

This sequence belongs to the phospholipase D family. Cardiolipin synthase subfamily. ClsA sub-subfamily.

The protein resides in the cell inner membrane. The enzyme catalyses 2 a 1,2-diacyl-sn-glycero-3-phospho-(1'-sn-glycerol) = a cardiolipin + glycerol. Functionally, catalyzes the reversible phosphatidyl group transfer from one phosphatidylglycerol molecule to another to form cardiolipin (CL) (diphosphatidylglycerol) and glycerol. The chain is Cardiolipin synthase A from Pectobacterium carotovorum subsp. carotovorum (strain PC1).